A 518-amino-acid polypeptide reads, in one-letter code: Macrophage receptor MARCO (518 aa).

At Met1–Phe48 the chain is on the cytoplasmic side. The helical; Signal-anchor for type II membrane protein transmembrane segment at Cys49–Ile69 threads the bilayer. The Extracellular segment spans residues Gln70–Ser518. Residues Asn87 and Asn138 are each glycosylated (N-linked (GlcNAc...) asparagine). The interval Gln147 to Met426 is disordered. Residues Lys149–Glu418 enclose the Collagen-like domain. A compositionally biased stretch (low complexity) spans Ser154–Ala163. Over residues Lys239–Asp250 the composition is skewed to basic and acidic residues. Composition is skewed to low complexity over residues Pro293 to Pro314 and Arg325 to Ala344. The span at Lys410–Gln421 shows a compositional bias: basic and acidic residues. One can recognise an SRCR domain in the interval Val423 to Ser518. 3 disulfide bridges follow: Cys446-Cys507, Cys459-Cys517, and Cys487-Cys497.

In terms of assembly, homotrimer; disulfide-linked. Trimers may assemble in larger oligomers thus resulting in the creation of a large surface capable of interacting with very large ligands. Post-translationally, N-glycosylated. In terms of tissue distribution, expressed in subpopulations of macrophages in the spleen and the medullary cord of lymph nodes (at protein level).

Its subcellular location is the cell membrane. In terms of biological role, pattern recognition receptor (PRR) which binds Gram-positive and Gram-negative bacteria. Also plays a role in binding of unopsonized particles by alveolar macrophages. Binds to the secretoglobin SCGB3A2. The chain is Macrophage receptor MARCO (Marco) from Mus musculus (Mouse).